Here is a 577-residue protein sequence, read N- to C-terminus: Aspartate--tRNA ligase (577 aa).

Glu-171 serves as a coordination point for L-aspartate. Positions 195–198 (QLFK) are aspartate. Arg-217 provides a ligand contact to L-aspartate. ATP contacts are provided by residues 217–219 (RDE) and Gln-226. His-437 serves as a coordination point for L-aspartate. Glu-472 contributes to the ATP binding site. Residue Arg-479 participates in L-aspartate binding. Position 524 to 527 (524 to 527 (GFDR)) interacts with ATP.

Belongs to the class-II aminoacyl-tRNA synthetase family. Type 1 subfamily. As to quaternary structure, homodimer.

Its subcellular location is the cytoplasm. The enzyme catalyses tRNA(Asp) + L-aspartate + ATP = L-aspartyl-tRNA(Asp) + AMP + diphosphate. In terms of biological role, catalyzes the attachment of L-aspartate to tRNA(Asp) in a two-step reaction: L-aspartate is first activated by ATP to form Asp-AMP and then transferred to the acceptor end of tRNA(Asp). This Deinococcus geothermalis (strain DSM 11300 / CIP 105573 / AG-3a) protein is Aspartate--tRNA ligase.